A 122-amino-acid polypeptide reads, in one-letter code: Small ribosomal subunit protein uS13 (122 aa).

The segment covering 95–116 (GLPVRGQKTKTNARTRKGRRKT) has biased composition (basic residues). Positions 95–122 (GLPVRGQKTKTNARTRKGRRKTVGAATK) are disordered.

This sequence belongs to the universal ribosomal protein uS13 family. As to quaternary structure, part of the 30S ribosomal subunit. Forms a loose heterodimer with protein S19. Forms two bridges to the 50S subunit in the 70S ribosome.

Functionally, located at the top of the head of the 30S subunit, it contacts several helices of the 16S rRNA. In the 70S ribosome it contacts the 23S rRNA (bridge B1a) and protein L5 of the 50S subunit (bridge B1b), connecting the 2 subunits; these bridges are implicated in subunit movement. Contacts the tRNAs in the A and P-sites. The protein is Small ribosomal subunit protein uS13 of Campylobacter curvus (strain 525.92).